Reading from the N-terminus, the 285-residue chain is NAD kinase (285 aa).

The Proton acceptor role is filled by Asp-64. NAD(+) is bound by residues 64-65 (DG), 140-141 (ND), Arg-151, Arg-168, Asp-170, and 181-186 (TGYNLS).

This sequence belongs to the NAD kinase family. A divalent metal cation is required as a cofactor.

Its subcellular location is the cytoplasm. The enzyme catalyses NAD(+) + ATP = ADP + NADP(+) + H(+). Functionally, involved in the regulation of the intracellular balance of NAD and NADP, and is a key enzyme in the biosynthesis of NADP. Catalyzes specifically the phosphorylation on 2'-hydroxyl of the adenosine moiety of NAD to yield NADP. The protein is NAD kinase of Lachnoclostridium phytofermentans (strain ATCC 700394 / DSM 18823 / ISDg) (Clostridium phytofermentans).